The primary structure comprises 62 residues: Putative antitoxin AF_1095 (62 aa).

Belongs to the UPF0165 family.

Possibly the antitoxin component of a type II toxin-antitoxin (TA) system. This Archaeoglobus fulgidus (strain ATCC 49558 / DSM 4304 / JCM 9628 / NBRC 100126 / VC-16) protein is Putative antitoxin AF_1095.